Reading from the N-terminus, the 368-residue chain is Alanine racemase (368 aa).

K34 (proton acceptor; specific for D-alanine) is an active-site residue. Position 34 is an N6-(pyridoxal phosphate)lysine (K34). R132 is a binding site for substrate. The Proton acceptor; specific for L-alanine role is filled by Y261. M309 contacts substrate.

It belongs to the alanine racemase family. The cofactor is pyridoxal 5'-phosphate.

The enzyme catalyses L-alanine = D-alanine. It participates in amino-acid biosynthesis; D-alanine biosynthesis; D-alanine from L-alanine: step 1/1. In terms of biological role, catalyzes the interconversion of L-alanine and D-alanine. May also act on other amino acids. The polypeptide is Alanine racemase (alr) (Carboxydothermus hydrogenoformans (strain ATCC BAA-161 / DSM 6008 / Z-2901)).